Consider the following 287-residue polypeptide: MARKTLTTALVKKFIPSRKSKSRKGENGIVLVVGGSYIYHGAPILSSIAALRSGTDLVYTSVPKINVASTRSVSPNLIVIPLVDQKLTRGAVNKLLGALPRKLDSATIGMGLAIQEKNALLHLVKSLLDRDVRLSLDASALIPEVLPLLANKNVVVTPHAGEFKRLFGQVPSNSKNERIKLVEEKAKEFGITVLLKGSTDIISNGSTTYLYEKKIPAMTVGGTGDVLSGLVAGLLSKNRKPLESAAAAAFINGLAGKVVQKKLGLHMTSMDLLPEISTVMKPFDKIM.

One can recognise a YjeF C-terminal domain in the interval 7–283 (TTALVKKFIP…PEISTVMKPF (277 aa)). The (6S)-NADPHX site is built by Ala-42 and His-159. AMP contacts are provided by residues 196–200 (KGSTD) and Gly-224. Asp-225 lines the (6S)-NADPHX pocket.

The protein belongs to the NnrD/CARKD family. In terms of assembly, homotetramer. The cofactor is Mg(2+).

It carries out the reaction (6S)-NADHX + ADP = AMP + phosphate + NADH + H(+). It catalyses the reaction (6S)-NADPHX + ADP = AMP + phosphate + NADPH + H(+). Catalyzes the dehydration of the S-form of NAD(P)HX at the expense of ADP, which is converted to AMP. Together with NAD(P)HX epimerase, which catalyzes the epimerization of the S- and R-forms, the enzyme allows the repair of both epimers of NAD(P)HX, a damaged form of NAD(P)H that is a result of enzymatic or heat-dependent hydration. This Nitrosopumilus maritimus (strain SCM1) protein is ADP-dependent (S)-NAD(P)H-hydrate dehydratase.